A 161-amino-acid chain; its full sequence is 6,7-dimethyl-8-ribityllumazine synthase (161 aa).

5-amino-6-(D-ribitylamino)uracil is bound by residues Trp-31, 63–65 (SFE), and 85–87 (VVI). 90–91 (GT) is a binding site for (2S)-2-hydroxy-3-oxobutyl phosphate. His-93 acts as the Proton donor in catalysis. Phe-118 serves as a coordination point for 5-amino-6-(D-ribitylamino)uracil. Arg-132 is a (2S)-2-hydroxy-3-oxobutyl phosphate binding site.

The protein belongs to the DMRL synthase family.

It carries out the reaction (2S)-2-hydroxy-3-oxobutyl phosphate + 5-amino-6-(D-ribitylamino)uracil = 6,7-dimethyl-8-(1-D-ribityl)lumazine + phosphate + 2 H2O + H(+). It functions in the pathway cofactor biosynthesis; riboflavin biosynthesis; riboflavin from 2-hydroxy-3-oxobutyl phosphate and 5-amino-6-(D-ribitylamino)uracil: step 1/2. Functionally, catalyzes the formation of 6,7-dimethyl-8-ribityllumazine by condensation of 5-amino-6-(D-ribitylamino)uracil with 3,4-dihydroxy-2-butanone 4-phosphate. This is the penultimate step in the biosynthesis of riboflavin. This is 6,7-dimethyl-8-ribityllumazine synthase from Paenarthrobacter aurescens (strain TC1).